The chain runs to 585 residues: Arginine--tRNA ligase (585 aa).

A 'HIGH' region motif is present at residues 131 to 141 (ANPTGPMHVGH).

The protein belongs to the class-I aminoacyl-tRNA synthetase family. In terms of assembly, monomer.

The protein resides in the cytoplasm. It carries out the reaction tRNA(Arg) + L-arginine + ATP = L-arginyl-tRNA(Arg) + AMP + diphosphate. The sequence is that of Arginine--tRNA ligase from Bartonella henselae (strain ATCC 49882 / DSM 28221 / CCUG 30454 / Houston 1) (Rochalimaea henselae).